We begin with the raw amino-acid sequence, 288 residues long: Bifunctional protein FolD (288 aa).

Residues 166–168 and Ile232 contribute to the NADP(+) site; that span reads GAS.

Belongs to the tetrahydrofolate dehydrogenase/cyclohydrolase family. As to quaternary structure, homodimer.

The enzyme catalyses (6R)-5,10-methylene-5,6,7,8-tetrahydrofolate + NADP(+) = (6R)-5,10-methenyltetrahydrofolate + NADPH. It carries out the reaction (6R)-5,10-methenyltetrahydrofolate + H2O = (6R)-10-formyltetrahydrofolate + H(+). It participates in one-carbon metabolism; tetrahydrofolate interconversion. In terms of biological role, catalyzes the oxidation of 5,10-methylenetetrahydrofolate to 5,10-methenyltetrahydrofolate and then the hydrolysis of 5,10-methenyltetrahydrofolate to 10-formyltetrahydrofolate. This chain is Bifunctional protein FolD, found in Salmonella arizonae (strain ATCC BAA-731 / CDC346-86 / RSK2980).